The sequence spans 377 residues: Putative holocytochrome-c synthase (377 aa).

2 disordered regions span residues M1–A29 and Q111–G136. Residues T7 to K22 are compositionally biased toward basic and acidic residues. 2 HRM repeats span residues E114–V119 and T124–N129.

The protein belongs to the cytochrome c-type heme lyase family.

Its subcellular location is the mitochondrion inner membrane. The protein resides in the mitochondrion intermembrane space. It catalyses the reaction holo-[cytochrome c] = apo-[cytochrome c] + heme b. Lyase that catalyzes the covalent linking of the heme group to the cytochrome C apoprotein to produce the mature functional cytochrome. This is Putative holocytochrome-c synthase from Schizosaccharomyces pombe (strain 972 / ATCC 24843) (Fission yeast).